Reading from the N-terminus, the 349-residue chain is Aquaporin-4 (349 aa).

2 helical membrane-spanning segments follow: residues 92-112 (LSES…AATA) and 125-147 (AFYH…GGLL). The NPA 1 motif lies at 148–150 (NPA). A helical transmembrane segment spans residues 167-187 (LIYMSAQYFGAFIASAVVYLI). 2 N-linked (GlcNAc...) asparagine glycosylation sites follow: N194 and N207. A run of 2 helical transmembrane segments spans residues 225–245 (GAIF…LSIC) and 256–276 (MFPF…SYSA). Residues 281–283 (NPA) carry the NPA 2 motif. The chain crosses the membrane as a helical span at residues 314–334 (WLFPYVGALLGGVIYEIFIGI).

Belongs to the MIP/aquaporin (TC 1.A.8) family.

The protein localises to the cell membrane. Its function is as follows. Aquaglyceroporin that may modulate the water content and osmolytes during anhydrobiosis. In Milnesium tardigradum (Water bear), this protein is Aquaporin-4.